The following is a 240-amino-acid chain: Uridylate kinase (240 aa).

An ATP-binding site is contributed by lysine 12 to glycine 15. The segment at glycine 20–glycine 25 is involved in allosteric activation by GTP. Glycine 54 is a binding site for UMP. The ATP site is built by glycine 55 and arginine 59. Residues aspartate 74 and threonine 135–threonine 142 contribute to the UMP site. The ATP site is built by asparagine 163, tyrosine 169, and aspartate 172.

It belongs to the UMP kinase family. As to quaternary structure, homohexamer.

It localises to the cytoplasm. It catalyses the reaction UMP + ATP = UDP + ADP. Its pathway is pyrimidine metabolism; CTP biosynthesis via de novo pathway; UDP from UMP (UMPK route): step 1/1. Allosterically activated by GTP. Inhibited by UTP. In terms of biological role, catalyzes the reversible phosphorylation of UMP to UDP. The polypeptide is Uridylate kinase (Bacillus licheniformis (strain ATCC 14580 / DSM 13 / JCM 2505 / CCUG 7422 / NBRC 12200 / NCIMB 9375 / NCTC 10341 / NRRL NRS-1264 / Gibson 46)).